A 132-amino-acid polypeptide reads, in one-letter code: Large-conductance mechanosensitive channel (132 aa).

Helical transmembrane passes span 14 to 34, 38 to 58, and 67 to 87; these read VVDLAVGVVIGAAFGKIVSSL, IITPLLGMVLGGVDFTSLHFG, and GNFIQTIFDFLIIAASIFMFV.

Belongs to the MscL family. Homopentamer.

The protein localises to the cell membrane. Channel that opens in response to stretch forces in the membrane lipid bilayer. May participate in the regulation of osmotic pressure changes within the cell. The chain is Large-conductance mechanosensitive channel from Bacillus cereus (strain ATCC 10987 / NRS 248).